We begin with the raw amino-acid sequence, 215 residues long: ATP-dependent dethiobiotin synthetase BioD (215 aa).

Residue 13-18 participates in ATP binding; that stretch reads DIGKTV. Position 17 (threonine 17) interacts with Mg(2+). Residue lysine 38 is part of the active site. Substrate is bound at residue threonine 42. ATP is bound by residues aspartate 50, 115–118, and 175–176; these read EGAG and NH. Mg(2+)-binding residues include aspartate 50 and glutamate 115.

Belongs to the dethiobiotin synthetase family. In terms of assembly, homodimer. Mg(2+) serves as cofactor.

The protein localises to the cytoplasm. The catalysed reaction is (7R,8S)-7,8-diammoniononanoate + CO2 + ATP = (4R,5S)-dethiobiotin + ADP + phosphate + 3 H(+). The protein operates within cofactor biosynthesis; biotin biosynthesis; biotin from 7,8-diaminononanoate: step 1/2. In terms of biological role, catalyzes a mechanistically unusual reaction, the ATP-dependent insertion of CO2 between the N7 and N8 nitrogen atoms of 7,8-diaminopelargonic acid (DAPA, also called 7,8-diammoniononanoate) to form a ureido ring. The sequence is that of ATP-dependent dethiobiotin synthetase BioD from Neisseria meningitidis serogroup C (strain 053442).